The chain runs to 270 residues: Formamidopyrimidine-DNA glycosylase (270 aa).

Pro2 acts as the Schiff-base intermediate with DNA in catalysis. Glu3 (proton donor) is an active-site residue. Residue Lys58 is the Proton donor; for beta-elimination activity of the active site. DNA contacts are provided by His91, Arg110, and Arg151. The FPG-type zinc-finger motif lies at 236-270 (FVYGRGGMPCKLCGTTLREAKLGQRASVYCPRCQR). Arg260 (proton donor; for delta-elimination activity) is an active-site residue.

Belongs to the FPG family. In terms of assembly, monomer. The cofactor is Zn(2+).

It catalyses the reaction Hydrolysis of DNA containing ring-opened 7-methylguanine residues, releasing 2,6-diamino-4-hydroxy-5-(N-methyl)formamidopyrimidine.. The catalysed reaction is 2'-deoxyribonucleotide-(2'-deoxyribose 5'-phosphate)-2'-deoxyribonucleotide-DNA = a 3'-end 2'-deoxyribonucleotide-(2,3-dehydro-2,3-deoxyribose 5'-phosphate)-DNA + a 5'-end 5'-phospho-2'-deoxyribonucleoside-DNA + H(+). Involved in base excision repair of DNA damaged by oxidation or by mutagenic agents. Acts as a DNA glycosylase that recognizes and removes damaged bases. Has a preference for oxidized purines, such as 7,8-dihydro-8-oxoguanine (8-oxoG). Has AP (apurinic/apyrimidinic) lyase activity and introduces nicks in the DNA strand. Cleaves the DNA backbone by beta-delta elimination to generate a single-strand break at the site of the removed base with both 3'- and 5'-phosphates. This Pseudomonas putida (strain W619) protein is Formamidopyrimidine-DNA glycosylase.